The sequence spans 213 residues: Inactive ribonuclease-like protein 10 (213 aa).

Positions 1–24 (MKLTLVQFFFMMLLLLLGLGVGLG) are cleaved as a signal peptide. Residue Asn128 is glycosylated (N-linked (GlcNAc...) asparagine).

Belongs to the pancreatic ribonuclease family. The N-terminus is blocked. Glycosylated. As to expression, male-specific expression in proximal caput of the epididymis.

The protein localises to the secreted. Secreted proximal epididymal protein required for post-testicular sperm maturation and male fertility. May be involved in sperm adhesion to the egg zona pellucida. Does not have ribonuclease activity. In Sus scrofa (Pig), this protein is Inactive ribonuclease-like protein 10 (RNASE10).